A 492-amino-acid chain; its full sequence is B3 domain-containing protein REM3 (492 aa).

The TF-B3 1 DNA-binding region spans 12–104; sequence NRPFFVRSLA…VFHVTPSGRS (93 aa). A compositionally biased stretch (low complexity) spans 105–116; the sequence is FSQIRTSSSSGD. Residues 105 to 134 form a disordered region; the sequence is FSQIRTSSSSGDYDSDDDDDEAGDDDSDSK. Positions 117–131 are enriched in acidic residues; the sequence is YDSDDDDDEAGDDDS. 2 DNA-binding regions (TF-B3) span residues 154–250 and 286–382; these read YCLL…LCFK and FLTV…FCSE. The segment covering 385–395 has biased composition (basic and acidic residues); that stretch reads IEQEEAPEERG. The segment at 385–427 is disordered; sequence IEQEEAPEERGTPLPKRARVSAEVGHSRRTQAPNKSSDDPKIL.

It localises to the nucleus. The sequence is that of B3 domain-containing protein REM3 (REM3) from Arabidopsis thaliana (Mouse-ear cress).